The chain runs to 1570 residues: Mediator of RNA polymerase II transcription subunit 1 (1570 aa).

2 consecutive short sequence motifs (LXXLL motif) follow at residues 585–589 (LTSLL) and 626–630 (LMNLL). Disordered regions lie at residues 592–687 (TNNT…TEDD), 771–880 (SKLS…FKDF), and 922–1561 (SKTL…MDDD). Over residues 675-687 (TGAEKMKNQTEDD) the composition is skewed to basic and acidic residues. Composition is skewed to polar residues over residues 788-801 (RDSSSSGHSQSTLF), 832-861 (GSPNSDSPNTFFNSVDFNPDLLNSQSQSGF), and 931-942 (QETQSRSQSPLL). Over residues 946-958 (LGKDRPQKQKVKE) the composition is skewed to basic and acidic residues. The span at 961–970 (NGGGAGGGLS) shows a compositional bias: gly residues. Low complexity-rich tracts occupy residues 1022–1035 (PTSTGGSKSPGTSG), 1066–1082 (SSHGQYSSSGSSSSSSS), 1089–1113 (SSLSSSASGKIKSNKSDGSSGMKIG), 1121–1140 (SGQSGQSSSQSKNSSQSMGK), and 1152–1161 (SSNVSNSSGS). The span at 1173–1190 (MNPSLSKPNISPSHSRPS) shows a compositional bias: polar residues. Over residues 1217-1228 (GSGGQHLSGGGS) the composition is skewed to gly residues. Low complexity predominate over residues 1229–1271 (NSTTKSSSGLVSSGSLSQKPNSSSSSSSSSSSSSSSSSSSSSS). Residues 1276-1287 (VSQNLHGNSKGK) show a composition bias toward polar residues. A compositionally biased stretch (gly residues) spans 1308–1328 (VGTGGPGSEDPMDGGGGGGST). Residues 1347-1359 (PTKREKSEKDKSK) show a composition bias toward basic and acidic residues. 2 stretches are compositionally biased toward polar residues: residues 1418-1433 (SQMQKNYGSPLISGST) and 1441-1455 (PSHNKSPAYTPQALD). Residues 1459–1469 (ESGSSSIAEKS) are compositionally biased toward low complexity. Over residues 1494-1503 (KHKKHKKEKK) the composition is skewed to basic residues. The segment covering 1504–1516 (RLKDKDRDREKKK) has biased composition (basic and acidic residues). The segment covering 1536–1546 (MAMSGGSMMSS) has biased composition (low complexity).

Belongs to the Mediator complex subunit 1 family. Component of the Mediator complex.

It is found in the nucleus. Component of the Mediator complex, a coactivator involved in the regulated transcription of nearly all RNA polymerase II-dependent genes. Mediator functions as a bridge to convey information from gene-specific regulatory proteins to the basal RNA polymerase II transcription machinery. Mediator is recruited to promoters by direct interactions with regulatory proteins and serves as a scaffold for the assembly of a functional preinitiation complex with RNA polymerase II and the general transcription factors. This is Mediator of RNA polymerase II transcription subunit 1 (med1) from Xenopus laevis (African clawed frog).